A 107-amino-acid chain; its full sequence is Nucleoid-associated protein PHZ_c0369 (107 aa).

This sequence belongs to the YbaB/EbfC family. Homodimer.

The protein localises to the cytoplasm. It is found in the nucleoid. Its function is as follows. Binds to DNA and alters its conformation. May be involved in regulation of gene expression, nucleoid organization and DNA protection. The sequence is that of Nucleoid-associated protein PHZ_c0369 from Phenylobacterium zucineum (strain HLK1).